The sequence spans 924 residues: Protein SMAX1-LIKE 2 (924 aa).

The Clp R domain occupies 8 to 181; sequence IQQTLTPEAA…SAIEQSLIGN (174 aa). A repeat 1 region spans residues 12-83; sequence LTPEAATVLN…LCFSVALERL (72 aa). Positions 86 to 105 are enriched in low complexity; it reads TSTTTTTTSSSSSSSPSQTQ. Residues 86–107 form a disordered region; sequence TSTTTTTTSSSSSSSPSQTQEP. The segment at 109–181 is repeat 2; the sequence is LSNALTAALK…SAIEQSLIGN (73 aa). The tract at residues 522-552 is disordered; that stretch reads TRSDITPPGSPVGTDLVLGRPNRGLSSPEKK. An EAR motif is present at residues 780-784; the sequence is FDLNE.

This sequence belongs to the ClpA/ClpB family. As to quaternary structure, interacts probably with TPL/TPR in an EAR-motif dependent manner. In terms of tissue distribution, expressed in seedlings and leaves. Detected in roots and axillary branches.

Functionally, probable component of a transcriptional corepressor complex that acts specifically in the karrikin pathway. Controls seedling growth redundantly with SMAX1, but is not involved in leaf morphology, shoot branching or germination control. This Arabidopsis thaliana (Mouse-ear cress) protein is Protein SMAX1-LIKE 2.